A 601-amino-acid polypeptide reads, in one-letter code: DNA replication licensing factor MCM3 (601 aa).

One can recognise an MCM domain in the interval 180-386; that stretch reads PINLLSKSIA…LDRRLSQHVL (207 aa). 229 to 236 lines the ATP pocket; that stretch reads GDPSTAKS. The short motif at 361–364 is the Arginine finger element; sequence SRFD.

Belongs to the MCM family. Component of the MCM2-7 complex.

It localises to the nucleus. Its subcellular location is the chromosome. The protein localises to the nucleoplasm. It catalyses the reaction ATP + H2O = ADP + phosphate + H(+). Acts as a component of the MCM2-7 complex (MCM complex) which is the replicative helicase essential for DNA replication initiation and elongation in eukaryotic cells. Required for DNA replication and cell proliferation. The active ATPase sites in the MCM2-7 ring are formed through the interaction surfaces of two neighboring subunits such that a critical structure of a conserved arginine finger motif is provided in trans relative to the ATP-binding site of the Walker A box of the adjacent subunit. The chain is DNA replication licensing factor MCM3 from Entamoeba histolytica (strain ATCC 30459 / HM-1:IMSS / ABRM).